The chain runs to 142 residues: Acidic phospholipase A2 PA4 (142 aa).

3 residues coordinate Ca(2+): W10, G12, and G14. Cystine bridges form between C11/C33, C32/C72, and C39/C65. Residue H36 is part of the active site. D37 is a binding site for Ca(2+).

This sequence belongs to the phospholipase A2 family. Group III subfamily. Ca(2+) is required as a cofactor. In terms of tissue distribution, expressed by the venom gland.

Its subcellular location is the secreted. It carries out the reaction a 1,2-diacyl-sn-glycero-3-phosphocholine + H2O = a 1-acyl-sn-glycero-3-phosphocholine + a fatty acid + H(+). PLA2 catalyzes the calcium-dependent hydrolysis of the 2-acyl groups in 3-sn-phosphoglycerides. This Heloderma suspectum (Gila monster) protein is Acidic phospholipase A2 PA4.